We begin with the raw amino-acid sequence, 161 residues long: Transcription antitermination protein NusB (161 aa).

This sequence belongs to the NusB family.

Its function is as follows. Involved in transcription antitermination. Required for transcription of ribosomal RNA (rRNA) genes. Binds specifically to the boxA antiterminator sequence of the ribosomal RNA (rrn) operons. This Nitrobacter winogradskyi (strain ATCC 25391 / DSM 10237 / CIP 104748 / NCIMB 11846 / Nb-255) protein is Transcription antitermination protein NusB.